A 719-amino-acid chain; its full sequence is Polyphosphate kinase (719 aa).

Asn-47 serves as a coordination point for ATP. Mg(2+) is bound by residues Arg-377 and Arg-407. His-437 serves as the catalytic Phosphohistidine intermediate. Positions 470, 566, and 594 each coordinate ATP.

The protein belongs to the polyphosphate kinase 1 (PPK1) family. Mg(2+) serves as cofactor. An intermediate of this reaction is the autophosphorylated ppk in which a phosphate is covalently linked to a histidine residue through a N-P bond.

The enzyme catalyses [phosphate](n) + ATP = [phosphate](n+1) + ADP. Functionally, catalyzes the reversible transfer of the terminal phosphate of ATP to form a long-chain polyphosphate (polyP). The polypeptide is Polyphosphate kinase (Exiguobacterium sibiricum (strain DSM 17290 / CCUG 55495 / CIP 109462 / JCM 13490 / 255-15)).